Consider the following 435-residue polypeptide: Putative magnesium transporter MRS2-H (435 aa).

The tract at residues 19–54 (FSSSPESRRCRSVHRVPSRPRPPLAPPARVMGKGNS) is disordered. 2 helical membrane-spanning segments follow: residues 369 to 389 (LTLI…AAFA) and 408 to 428 (FVGA…TYAW).

The protein belongs to the CorA metal ion transporter (MIT) (TC 1.A.35.5) family.

The protein resides in the membrane. In terms of biological role, putative magnesium transporter. In Oryza sativa subsp. indica (Rice), this protein is Putative magnesium transporter MRS2-H (MRS2-H).